Here is a 319-residue protein sequence, read N- to C-terminus: Plasmodesmata-located protein 4 (319 aa).

The first 26 residues, 1 to 26 (MVVHLISLLTQTLALIILSLPSIINT), serve as a signal peptide directing secretion. Topologically, residues 27–288 (SQLDYDTLVF…EGSKVNTGKS (262 aa)) are extracellular. Intrachain disulfides connect Cys-39-Cys-127, Cys-103-Cys-112, Cys-115-Cys-140, Cys-177-Cys-247, Cys-223-Cys-232, and Cys-235-Cys-260. 2 Gnk2-homologous domains span residues 45-149 (NILQ…FERI) and 170-269 (HGLI…YHPH). A helical transmembrane segment spans residues 289–309 (LAIVVGGVAALVFVAIFFMFL). The tract at residues 289 to 309 (LAIVVGGVAALVFVAIFFMFL) is necessary and sufficient for plasmodesmal targeting. At 310-319 (KSLRKKGDDC) the chain is on the cytoplasmic side.

This sequence belongs to the cysteine-rich repeat secretory protein family. Plasmodesmata-located proteins (PDLD) subfamily. (Microbial infection) Interacts with Grapevine fanleaf virus (GFLV) 2B-MP. In terms of tissue distribution, highly expressed in seeds and roots.

It is found in the cell membrane. Its subcellular location is the cell junction. It localises to the plasmodesma. Its function is as follows. Modulates cell-to-cell trafficking. This Arabidopsis thaliana (Mouse-ear cress) protein is Plasmodesmata-located protein 4.